The primary structure comprises 365 residues: Protein SGT1 homolog (365 aa).

Position 2 is an N-acetylalanine (Ala2). TPR repeat units lie at residues 11-44, 45-78, and 79-112; these read SQRF…KPDD, AQYY…NPNN, and STAM…DIET. Residues 169 to 258 enclose the CS domain; it reads QSKIKYDWYQ…PEAVRWEKLE (90 aa). Position 265 is a phosphothreonine (Thr265). The SGS domain occupies 276 to 365; that stretch reads LYPSSSPYTR…PPDDMEWKKY (90 aa). Ser281 is subject to Phosphoserine. Position 284 is a phosphothreonine (Thr284). Lys295 is covalently cross-linked (Glycyl lysine isopeptide (Lys-Gly) (interchain with G-Cter in SUMO1); alternate). A Glycyl lysine isopeptide (Lys-Gly) (interchain with G-Cter in SUMO2); alternate cross-link involves residue Lys295. Ser331 carries the post-translational modification Phosphoserine.

The protein belongs to the SGT1 family. As to quaternary structure, probably associates with SCF (SKP1-CUL1-F-box protein) complex through interaction with SKP1. Interacts with S100A6. Interacts with HSP90. Phosphorylated at Ser-281 and Ser-331, dephosphorylation promotes nuclear translocation, most likely due to disruption of the SUGT1-HSP90 complex.

The protein resides in the cytoplasm. It localises to the nucleus. May play a role in ubiquitination and subsequent proteasomal degradation of target proteins. This Homo sapiens (Human) protein is Protein SGT1 homolog.